The primary structure comprises 203 residues: Outer-membrane lipoprotein carrier protein (203 aa).

An N-terminal signal peptide occupies residues 1-21 (MKKLAITCALLSGMVVSQVWA). The disordered stretch occupies residues 184–203 (DASKFTFTPPKGVTVDDQRK).

This sequence belongs to the LolA family. Monomer.

It localises to the periplasm. Its function is as follows. Participates in the translocation of lipoproteins from the inner membrane to the outer membrane. Only forms a complex with a lipoprotein if the residue after the N-terminal Cys is not an aspartate (The Asp acts as a targeting signal to indicate that the lipoprotein should stay in the inner membrane). The sequence is that of Outer-membrane lipoprotein carrier protein from Klebsiella pneumoniae (strain 342).